Reading from the N-terminus, the 404-residue chain is Multidrug resistance protein MdtG (404 aa).

11 helical membrane passes run 19 to 39, 56 to 76, 90 to 110, 113 to 133, 149 to 169, 171 to 191, 222 to 242, 254 to 274, 288 to 308, 317 to 337, and 376 to 396; these read LGCF…PLYV, LVFS…GGLA, LGMA…QFLI, ALLG…ATQV, GVSG…HYGL, PVFF…FFFI, LFVT…ILTL, IAFI…LSAP, ILIV…FVQT, FLLG…LVYN, and AVFC…WNSL.

This sequence belongs to the major facilitator superfamily. DHA1 family. MdtG (TC 2.A.1.2.20) subfamily.

Its subcellular location is the cell inner membrane. The chain is Multidrug resistance protein MdtG from Salmonella paratyphi C (strain RKS4594).